Reading from the N-terminus, the 699-residue chain is Dymeclin (699 aa).

Glycine 2 carries the N-myristoyl glycine lipid modification. Serine 346 is modified (phosphoserine).

Belongs to the dymeclin family.

The chain is Dymeclin from Drosophila melanogaster (Fruit fly).